The chain runs to 85 residues: Large ribosomal subunit protein bL27 (85 aa).

The tract at residues 1–21 (MAHKKGVGSTRNGRDSDGQRL) is disordered.

The protein belongs to the bacterial ribosomal protein bL27 family.

The polypeptide is Large ribosomal subunit protein bL27 (Geotalea uraniireducens (strain Rf4) (Geobacter uraniireducens)).